A 639-amino-acid polypeptide reads, in one-letter code: Phosphomethylpyrimidine synthase (639 aa).

A disordered region spans residues 49-71 (DTPTDFGGEQNRPVRVYDTSGPY). Residues asparagine 231, methionine 260, tyrosine 289, histidine 325, 345–347 (SRG), 386–389 (DGLR), and glutamate 425 contribute to the substrate site. Zn(2+) is bound at residue histidine 429. Tyrosine 452 serves as a coordination point for substrate. Histidine 493 provides a ligand contact to Zn(2+). Cysteine 573, cysteine 576, and cysteine 581 together coordinate [4Fe-4S] cluster.

It belongs to the ThiC family. As to quaternary structure, homodimer. Requires [4Fe-4S] cluster as cofactor.

The enzyme catalyses 5-amino-1-(5-phospho-beta-D-ribosyl)imidazole + S-adenosyl-L-methionine = 4-amino-2-methyl-5-(phosphooxymethyl)pyrimidine + CO + 5'-deoxyadenosine + formate + L-methionine + 3 H(+). The protein operates within cofactor biosynthesis; thiamine diphosphate biosynthesis. Functionally, catalyzes the synthesis of the hydroxymethylpyrimidine phosphate (HMP-P) moiety of thiamine from aminoimidazole ribotide (AIR) in a radical S-adenosyl-L-methionine (SAM)-dependent reaction. The chain is Phosphomethylpyrimidine synthase from Teredinibacter turnerae (strain ATCC 39867 / T7901).